The sequence spans 605 residues: DNA mismatch repair protein MutL (605 aa).

Belongs to the DNA mismatch repair MutL/HexB family.

This protein is involved in the repair of mismatches in DNA. It is required for dam-dependent methyl-directed DNA mismatch repair. May act as a 'molecular matchmaker', a protein that promotes the formation of a stable complex between two or more DNA-binding proteins in an ATP-dependent manner without itself being part of a final effector complex. This Sinorhizobium medicae (strain WSM419) (Ensifer medicae) protein is DNA mismatch repair protein MutL.